The chain runs to 217 residues: uncharacterized protein (217 aa).

A helical transmembrane segment spans residues 26–48; that stretch reads VFMRGYVVGLVLALMLVTAPAMA.

The protein resides in the membrane. This is an uncharacterized protein from Archaeoglobus fulgidus (strain ATCC 49558 / DSM 4304 / JCM 9628 / NBRC 100126 / VC-16).